The following is a 246-amino-acid chain: Aspartate/glutamate leucyltransferase (246 aa).

Belongs to the R-transferase family. Bpt subfamily.

The protein resides in the cytoplasm. The enzyme catalyses N-terminal L-glutamyl-[protein] + L-leucyl-tRNA(Leu) = N-terminal L-leucyl-L-glutamyl-[protein] + tRNA(Leu) + H(+). It carries out the reaction N-terminal L-aspartyl-[protein] + L-leucyl-tRNA(Leu) = N-terminal L-leucyl-L-aspartyl-[protein] + tRNA(Leu) + H(+). Functionally, functions in the N-end rule pathway of protein degradation where it conjugates Leu from its aminoacyl-tRNA to the N-termini of proteins containing an N-terminal aspartate or glutamate. The protein is Aspartate/glutamate leucyltransferase of Rhodospirillum rubrum (strain ATCC 11170 / ATH 1.1.1 / DSM 467 / LMG 4362 / NCIMB 8255 / S1).